The sequence spans 352 residues: Glucose 1-dehydrogenase 1 (352 aa).

Cys35 contributes to the Zn(2+) binding site. Thr37 serves as a coordination point for substrate. Residues His60 and Glu61 each contribute to the Zn(2+) site. A substrate-binding site is contributed by Asn83. Zn(2+) is bound by residues Cys87, Cys90, Cys93, and Cys101. Substrate-binding residues include Glu108, Gln144, and Asp148. Residue Gln144 participates in Zn(2+) binding. NADP(+) contacts are provided by residues 182–185 (TGTI), 204–206 (NKR), 264–266 (FGF), 292–294 (LIN), and Lys341. Asn294 provides a ligand contact to substrate.

Belongs to the zinc-containing alcohol dehydrogenase family. Glucose 1-dehydrogenase subfamily. Zn(2+) is required as a cofactor.

The enzyme catalyses D-glucose + NAD(+) = D-glucono-1,5-lactone + NADH + H(+). The catalysed reaction is D-glucose + NADP(+) = D-glucono-1,5-lactone + NADPH + H(+). Catalyzes the NAD(P)(+)-dependent oxidation of D-glucose to D-gluconate via gluconolactone. Can utilize both NAD(+) and NADP(+) as electron acceptor. Is involved in the degradation of glucose through a non-phosphorylative variant of the Entner-Doudoroff pathway. The chain is Glucose 1-dehydrogenase 1 from Picrophilus torridus (strain ATCC 700027 / DSM 9790 / JCM 10055 / NBRC 100828 / KAW 2/3).